A 143-amino-acid polypeptide reads, in one-letter code: Large ribosomal subunit protein uL16 (143 aa).

It belongs to the universal ribosomal protein uL16 family. In terms of assembly, part of the 50S ribosomal subunit.

Its function is as follows. Binds 23S rRNA and is also seen to make contacts with the A and possibly P site tRNAs. The chain is Large ribosomal subunit protein uL16 from Thermosynechococcus vestitus (strain NIES-2133 / IAM M-273 / BP-1).